We begin with the raw amino-acid sequence, 216 residues long: Sperm microtubule inner protein 8 (216 aa).

In terms of assembly, microtubule inner protein component of sperm flagellar doublet microtubules. Expressed in sperm.

It is found in the cytoplasm. Its subcellular location is the cytoskeleton. The protein resides in the flagellum axoneme. Its function is as follows. Microtubule inner protein (MIP) part of the dynein-decorated doublet microtubules (DMTs) in flagellum axoneme. May serve to reinforce and thus stabilize the microtubule structure in the sperm flagella. The polypeptide is Sperm microtubule inner protein 8 (SPMIP8) (Bos taurus (Bovine)).